A 456-amino-acid polypeptide reads, in one-letter code: 3-isopropylmalate dehydratase large subunit (456 aa).

3 residues coordinate [4Fe-4S] cluster: C336, C396, and C399.

This sequence belongs to the aconitase/IPM isomerase family. LeuC type 1 subfamily. In terms of assembly, heterodimer of LeuC and LeuD. It depends on [4Fe-4S] cluster as a cofactor.

It catalyses the reaction (2R,3S)-3-isopropylmalate = (2S)-2-isopropylmalate. It participates in amino-acid biosynthesis; L-leucine biosynthesis; L-leucine from 3-methyl-2-oxobutanoate: step 2/4. Its function is as follows. Catalyzes the isomerization between 2-isopropylmalate and 3-isopropylmalate, via the formation of 2-isopropylmaleate. The polypeptide is 3-isopropylmalate dehydratase large subunit (Staphylococcus haemolyticus (strain JCSC1435)).